A 586-amino-acid chain; its full sequence is Phosphatidylinositol-3-phosphatase SAC1-A (586 aa).

The Cytoplasmic portion of the chain corresponds to 1-519 (MANAYERFNL…TPLHVKKDWK (519 aa)). One can recognise an SAC domain in the interval 121–450 (INNVLNTDGF…ANACAKQYAG (330 aa)). Residues 451–586 (TGALKTDFTR…PKLVQKEKMD (136 aa)) are essential for phosphatidylinositol-4-phosphate phosphatase activity. Residues 520 to 540 (FLLLPVIMVVAFSMCIICLLM) form a helical membrane-spanning segment. The Lumenal portion of the chain corresponds to 541–547 (AGDTWTE). The helical transmembrane segment at 548–568 (TLAYVLFWGMASALTAAVIVV) threads the bilayer. The Cytoplasmic segment spans residues 569–586 (NGREFVDAPKLVQKEKMD).

The protein resides in the endoplasmic reticulum membrane. Its subcellular location is the golgi apparatus membrane. It carries out the reaction a 1,2-diacyl-sn-glycero-3-phospho-(1D-myo-inositol-3-phosphate) + H2O = a 1,2-diacyl-sn-glycero-3-phospho-(1D-myo-inositol) + phosphate. The catalysed reaction is a 1,2-diacyl-sn-glycero-3-phospho-(1D-myo-inositol 4-phosphate) + H2O = a 1,2-diacyl-sn-glycero-3-phospho-(1D-myo-inositol) + phosphate. Phosphoinositide phosphatase which catalyzes the hydrolysis of phosphatidylinositol 4-phosphate (PtdIns(4)P), phosphatidylinositol 3-phosphate (PtdIns(3)P) and has low activity towards phosphatidylinositol-3,5-bisphosphate (PtdIns(3,5)P2). The protein is Phosphatidylinositol-3-phosphatase SAC1-A (sacm1la) of Danio rerio (Zebrafish).